A 359-amino-acid polypeptide reads, in one-letter code: Cytochrome c oxidase subunit 2 (359 aa).

A signal peptide spans 1-28 (MEQQNKRGLKRKALLGGVLGSGGLAMAG). Cysteine 29 is lipidated: N-palmitoyl cysteine. A lipid anchor (S-diacylglycerol cysteine) is attached at cysteine 29. 2 helical membrane-spanning segments follow: residues 64–84 (VWVA…TAIF) and 107–127 (VPLE…LFFF). Histidine 244, cysteine 285, glutamate 287, cysteine 289, histidine 293, and methionine 296 together coordinate Cu cation. The disordered stretch occupies residues 338–359 (STAPFVSDRTGTRDGENFQTPA).

The protein belongs to the cytochrome c oxidase subunit 2 family. Associates with subunits I, III and IV to form cytochrome c oxidase. It depends on binuclear copper center (CuA) as a cofactor.

Its subcellular location is the cell membrane. The enzyme catalyses 4 Fe(II)-[cytochrome c] + O2 + 8 H(+)(in) = 4 Fe(III)-[cytochrome c] + 2 H2O + 4 H(+)(out). Its function is as follows. Subunits I and II form the functional core of the enzyme complex. Electrons originating in cytochrome c are transferred via heme a and Cu(A) to the binuclear center formed by heme a3 and Cu(B). This is Cytochrome c oxidase subunit 2 (ctaC) from Corynebacterium efficiens (strain DSM 44549 / YS-314 / AJ 12310 / JCM 11189 / NBRC 100395).